The chain runs to 554 residues: uncharacterized protein (554 aa).

Transmembrane regions (helical) follow at residues 13 to 31 (SVAHIVFLYAFVVAAGVYL), 36 to 58 (IFGVSLGVTFVLFAGILMGHFGF), 73 to 92 (LILFVFCIGLQVGPSFFSSF), 99 to 121 (LNLLAVGIVVLNIAVALGLYYLW), and 161 to 183 (IALGYACAYPLGVVGIIGSIIAI). 2 consecutive RCK C-terminal domains span residues 199-281 (KTQS…FIGK) and 282-366 (EVEL…VLGN). A run of 4 helical transmembrane segments spans residues 376–395 (IVTIFVGIFLGILLGSLPIA), 405–422 (LGLAGGPLVVAILIGRFG), 442–464 (IGIVLFLASVGIDAGANFVQTVV), and 468–490 (GLLYVGCGFLITVIPLLIIGAIA).

Belongs to the AAE transporter (TC 2.A.81) family.

The protein localises to the cell membrane. This is an uncharacterized protein from Bacteroides thetaiotaomicron (strain ATCC 29148 / DSM 2079 / JCM 5827 / CCUG 10774 / NCTC 10582 / VPI-5482 / E50).